The chain runs to 502 residues: ATP synthase subunit alpha (502 aa).

The segment at 115–136 (VDGLGPIHTTKTRPIESPAPGV) is disordered. 169 to 176 (GDRQTGKT) serves as a coordination point for ATP.

The protein belongs to the ATPase alpha/beta chains family. In terms of assembly, F-type ATPases have 2 components, CF(1) - the catalytic core - and CF(0) - the membrane proton channel. CF(1) has five subunits: alpha(3), beta(3), gamma(1), delta(1), epsilon(1). CF(0) has three main subunits: a(1), b(2) and c(9-12). The alpha and beta chains form an alternating ring which encloses part of the gamma chain. CF(1) is attached to CF(0) by a central stalk formed by the gamma and epsilon chains, while a peripheral stalk is formed by the delta and b chains.

Its subcellular location is the cell membrane. It catalyses the reaction ATP + H2O + 4 H(+)(in) = ADP + phosphate + 5 H(+)(out). Its function is as follows. Produces ATP from ADP in the presence of a proton gradient across the membrane. The alpha chain is a regulatory subunit. This chain is ATP synthase subunit alpha, found in Bacillus cytotoxicus (strain DSM 22905 / CIP 110041 / 391-98 / NVH 391-98).